Here is a 67-residue protein sequence, read N- to C-terminus: DNA-directed RNA polymerase subunit omega (67 aa).

Belongs to the RNA polymerase subunit omega family. As to quaternary structure, the RNAP catalytic core consists of 2 alpha, 1 beta, 1 beta' and 1 omega subunit. When a sigma factor is associated with the core the holoenzyme is formed, which can initiate transcription.

The enzyme catalyses RNA(n) + a ribonucleoside 5'-triphosphate = RNA(n+1) + diphosphate. In terms of biological role, promotes RNA polymerase assembly. Latches the N- and C-terminal regions of the beta' subunit thereby facilitating its interaction with the beta and alpha subunits. The sequence is that of DNA-directed RNA polymerase subunit omega from Exiguobacterium sibiricum (strain DSM 17290 / CCUG 55495 / CIP 109462 / JCM 13490 / 255-15).